Here is a 65-residue protein sequence, read N- to C-terminus: Large ribosomal subunit protein bL35 (65 aa).

Residues 30–65 (AFRSHLAQNKSTKQKRQSKHGTFMHPTDYKRLKDLM) are disordered. The segment covering 56–65 (TDYKRLKDLM) has biased composition (basic and acidic residues).

This sequence belongs to the bacterial ribosomal protein bL35 family.

In Mycoplasma mobile (strain ATCC 43663 / 163K / NCTC 11711) (Mesomycoplasma mobile), this protein is Large ribosomal subunit protein bL35.